The following is a 174-amino-acid chain: MTPAGERPRVGVIMGSDSDWPVMADAAAALAEFDIPAEVRVVSAHRTPEAMFSYARGAAERGLEVIIAGAGGAAHLPGMVAAATPLPVIGVPVPLGRLDGLDSLLSIVQMPAGVPVATVSIGGAGNAGLLAVRMLGAANPQLRARIVAFQDRLADVVAAKDAELQRLAGKLTRD.

Substrate is bound by residues S16, D19, and R46.

Belongs to the AIR carboxylase family. Class I subfamily.

It catalyses the reaction 5-carboxyamino-1-(5-phospho-D-ribosyl)imidazole + H(+) = 5-amino-1-(5-phospho-D-ribosyl)imidazole-4-carboxylate. It functions in the pathway purine metabolism; IMP biosynthesis via de novo pathway; 5-amino-1-(5-phospho-D-ribosyl)imidazole-4-carboxylate from 5-amino-1-(5-phospho-D-ribosyl)imidazole (N5-CAIR route): step 2/2. Its function is as follows. Catalyzes the conversion of N5-carboxyaminoimidazole ribonucleotide (N5-CAIR) to 4-carboxy-5-aminoimidazole ribonucleotide (CAIR). This is N5-carboxyaminoimidazole ribonucleotide mutase from Mycobacterium tuberculosis (strain CDC 1551 / Oshkosh).